We begin with the raw amino-acid sequence, 79 residues long: Small ribosomal subunit protein bS16 (79 aa).

Belongs to the bacterial ribosomal protein bS16 family.

The polypeptide is Small ribosomal subunit protein bS16 (Hahella chejuensis (strain KCTC 2396)).